Consider the following 410-residue polypeptide: Argininosuccinate synthase (410 aa).

An ATP-binding site is contributed by 6–14; sequence AYSGGLDTS. Position 84 (Tyr84) interacts with L-citrulline. Gly114 provides a ligand contact to ATP. The L-aspartate site is built by Thr116, Asn120, and Asp121. L-citrulline is bound at residue Asn120. L-citrulline is bound by residues Arg124, Ser169, Ser178, Glu254, and Tyr266.

This sequence belongs to the argininosuccinate synthase family. Type 1 subfamily. Homotetramer.

The protein localises to the cytoplasm. It carries out the reaction L-citrulline + L-aspartate + ATP = 2-(N(omega)-L-arginino)succinate + AMP + diphosphate + H(+). The protein operates within amino-acid biosynthesis; L-arginine biosynthesis; L-arginine from L-ornithine and carbamoyl phosphate: step 2/3. The sequence is that of Argininosuccinate synthase from Pyrococcus furiosus (strain ATCC 43587 / DSM 3638 / JCM 8422 / Vc1).